Consider the following 628-residue polypeptide: Very-long-chain aldehyde decarbonylase GL1-2 (628 aa).

5 consecutive transmembrane segments (helical) span residues 37-57, 131-151, 191-211, 299-319, and 331-351; these read GAAP…ARGL, GWAI…YWAH, VVIG…VGLV, DFVF…PFVL, and FVLL…WCCS. In terms of domain architecture, Fatty acid hydroxylase spans 137 to 277; sequence LLHVLVAEPL…MPIFDLLGGT (141 aa).

It belongs to the sterol desaturase family. In terms of assembly, homodimer. As to expression, expressed in germinating seeds, radicals and leaves.

It localises to the endoplasmic reticulum membrane. It catalyses the reaction a long-chain fatty aldehyde + 2 NADPH + O2 + H(+) = a long-chain alkane + formate + 2 NADP(+) + H2O. Functionally, aldehyde decarbonylase involved in the conversion of aldehydes to alkanes. Core component of a very-long-chain alkane synthesis complex. Required for the formation of wax layers conferring cuticular permeability and drought tolerance. In Oryza sativa subsp. japonica (Rice), this protein is Very-long-chain aldehyde decarbonylase GL1-2.